The following is a 435-amino-acid chain: Trigger factor (435 aa).

Residues 161 to 246 enclose the PPIase FKBP-type domain; sequence GKRVSIDFVG…VNKVEARELP (86 aa).

This sequence belongs to the FKBP-type PPIase family. Tig subfamily.

Its subcellular location is the cytoplasm. The enzyme catalyses [protein]-peptidylproline (omega=180) = [protein]-peptidylproline (omega=0). In terms of biological role, involved in protein export. Acts as a chaperone by maintaining the newly synthesized protein in an open conformation. Functions as a peptidyl-prolyl cis-trans isomerase. The sequence is that of Trigger factor from Vibrio campbellii (strain ATCC BAA-1116).